The chain runs to 1098 residues: Probable arabinosyltransferase B (1098 aa).

The next 12 helical transmembrane spans lie at 28-50 (WVATIAGLIGFVLSVATPLLPVV), 217-239 (LKLLAIIGAIVATVVALIALWRL), 271-293 (ASWRTFTLTDAVVIFGFLLWHVI), 402-419 (LRPEGIIALGSLVTYVLI), 434-456 (AVVTAAFTLGVQPTGLIAVAALV), 472-494 (LVGTLPLVSPMLAAGTVILTVVF), 541-558 (FGFLITALCLFTAVFIML), 570-587 (PAWRLMGVIFGTMFFLMF), 597-619 (GLFAAVGAAMAALTTVLVSPSVL), 626-648 (MAFLAALFFLLALCWATTNGWWY), 663-685 (IDGITVSTIFFALFAIAAGYAAW), and 698-720 (LIRALTTAPVPIVAGFMAAVFVA).

Belongs to the emb family.

The protein localises to the cell membrane. Arabinosyl transferase responsible for the polymerization of arabinose into the arabinan of arabinogalactan. In Mycobacterium bovis (strain ATCC BAA-935 / AF2122/97), this protein is Probable arabinosyltransferase B (embB).